A 316-amino-acid chain; its full sequence is Ribose-phosphate pyrophosphokinase (316 aa).

ATP is bound by residues 39–41 (DGE) and 98–99 (RQ). Mg(2+) is bound by residues H133 and D172. K195 is a catalytic residue. D-ribose 5-phosphate contacts are provided by residues R197, D221, and 225–229 (DTGGT).

It belongs to the ribose-phosphate pyrophosphokinase family. Class I subfamily. In terms of assembly, homohexamer. Mg(2+) serves as cofactor.

The protein resides in the cytoplasm. The catalysed reaction is D-ribose 5-phosphate + ATP = 5-phospho-alpha-D-ribose 1-diphosphate + AMP + H(+). Its pathway is metabolic intermediate biosynthesis; 5-phospho-alpha-D-ribose 1-diphosphate biosynthesis; 5-phospho-alpha-D-ribose 1-diphosphate from D-ribose 5-phosphate (route I): step 1/1. Functionally, involved in the biosynthesis of the central metabolite phospho-alpha-D-ribosyl-1-pyrophosphate (PRPP) via the transfer of pyrophosphoryl group from ATP to 1-hydroxyl of ribose-5-phosphate (Rib-5-P). The chain is Ribose-phosphate pyrophosphokinase from Ralstonia nicotianae (strain ATCC BAA-1114 / GMI1000) (Ralstonia solanacearum).